The chain runs to 355 residues: uncharacterized protein (355 aa).

Disordered stretches follow at residues 1-121 (MPID…MELR), 226-253 (RLMN…KSSM), and 336-355 (NLHR…RKRT). Residues 24 to 37 (LESESSSESDYEEV) show a composition bias toward acidic residues. Positions 65-87 (ETKTSSNFQNINPVQTIDNSASE) are enriched in polar residues. Over residues 91–105 (DASSAEGGSNSAASS) the composition is skewed to low complexity. Positions 106 to 117 (SEEEDSSDSEYE) are enriched in acidic residues. Residues 226 to 245 (RLMNSEEREAQDLKDAEASR) show a composition bias toward basic and acidic residues.

This is an uncharacterized protein from Schizosaccharomyces pombe (strain 972 / ATCC 24843) (Fission yeast).